We begin with the raw amino-acid sequence, 259 residues long: ATP synthase subunit a (259 aa).

The next 5 helical transmembrane spans lie at 29 to 49 (TVNI…IWLF), 89 to 109 (LIAP…AMDL), 132 to 154 (SADV…FYSI), 209 to 229 (IFIL…NVPW), and 230 to 250 (AIFH…LTIV).

The protein belongs to the ATPase A chain family. In terms of assembly, F-type ATPases have 2 components, CF(1) - the catalytic core - and CF(0) - the membrane proton channel. CF(1) has five subunits: alpha(3), beta(3), gamma(1), delta(1), epsilon(1). CF(0) has three main subunits: a(1), b(2) and c(9-12). The alpha and beta chains form an alternating ring which encloses part of the gamma chain. CF(1) is attached to CF(0) by a central stalk formed by the gamma and epsilon chains, while a peripheral stalk is formed by the delta and b chains.

The protein resides in the cell inner membrane. Functionally, key component of the proton channel; it plays a direct role in the translocation of protons across the membrane. The polypeptide is ATP synthase subunit a (Tolumonas auensis (strain DSM 9187 / NBRC 110442 / TA 4)).